The sequence spans 708 residues: Killer toxin KHS (708 aa).

The N-terminal stretch at 1 to 27 (MPRFAIIFALLIAYSLFLSTLFTGSIP) is a signal peptide. The propeptide occupies 28–36 (DRANTVTSN). The next 3 helical transmembrane spans lie at 77 to 97 (VCTIAGAVLATAAVIVAAVLV), 380 to 400 (IMMKITIFISKGNLWSIIYVI), and 466 to 486 (NIIYIYNSIHITCGAVYVIVH).

It to yeast YER187w. In terms of assembly, monomer.

Its subcellular location is the cell membrane. In terms of biological role, kills sensitive strains of yeast. The chain is Killer toxin KHS (KHS1) from Saccharomyces cerevisiae (Baker's yeast).